We begin with the raw amino-acid sequence, 341 residues long: tRNA N6-adenosine threonylcarbamoyltransferase (341 aa).

Residues His-111 and His-115 each contribute to the Fe cation site. Residues 134-138 (LVSGG), Asp-167, Gly-180, and Asn-272 contribute to the substrate site. Asp-300 is a Fe cation binding site.

The protein belongs to the KAE1 / TsaD family. It depends on Fe(2+) as a cofactor.

The protein resides in the cytoplasm. The enzyme catalyses L-threonylcarbamoyladenylate + adenosine(37) in tRNA = N(6)-L-threonylcarbamoyladenosine(37) in tRNA + AMP + H(+). Functionally, required for the formation of a threonylcarbamoyl group on adenosine at position 37 (t(6)A37) in tRNAs that read codons beginning with adenine. Is involved in the transfer of the threonylcarbamoyl moiety of threonylcarbamoyl-AMP (TC-AMP) to the N6 group of A37, together with TsaE and TsaB. TsaD likely plays a direct catalytic role in this reaction. This chain is tRNA N6-adenosine threonylcarbamoyltransferase, found in Blochmanniella pennsylvanica (strain BPEN).